We begin with the raw amino-acid sequence, 331 residues long: Tetraacyldisaccharide 4'-kinase (331 aa).

51–58 (TAGGAGKT) serves as a coordination point for ATP.

This sequence belongs to the LpxK family.

The enzyme catalyses a lipid A disaccharide + ATP = a lipid IVA + ADP + H(+). Its pathway is glycolipid biosynthesis; lipid IV(A) biosynthesis; lipid IV(A) from (3R)-3-hydroxytetradecanoyl-[acyl-carrier-protein] and UDP-N-acetyl-alpha-D-glucosamine: step 6/6. In terms of biological role, transfers the gamma-phosphate of ATP to the 4'-position of a tetraacyldisaccharide 1-phosphate intermediate (termed DS-1-P) to form tetraacyldisaccharide 1,4'-bis-phosphate (lipid IVA). The sequence is that of Tetraacyldisaccharide 4'-kinase from Rhodospirillum rubrum (strain ATCC 11170 / ATH 1.1.1 / DSM 467 / LMG 4362 / NCIMB 8255 / S1).